Consider the following 184-residue polypeptide: Ras-related protein Rap-1b (184 aa).

10–17 lines the GTP pocket; sequence GSGGVGKS. The short motif at 32 to 40 is the Effector region element; it reads YDPTIEDSY. GTP is bound by residues 57–61 and 116–119; these read DTAGT and NKCD. C181 is subject to Cysteine methyl ester. C181 is lipidated: S-geranylgeranyl cysteine. Positions 182–184 are cleaved as a propeptide — removed in mature form; sequence HLL.

The protein belongs to the small GTPase superfamily. Ras family.

It is found in the cell membrane. Its subcellular location is the cytoplasm. It localises to the cytosol. The protein localises to the cell junction. The enzyme catalyses GTP + H2O = GDP + phosphate + H(+). Probable GTP-binding protein that possesses GTPase activity. May play a role in endothelial cell polarity and endothelial barrier function. The polypeptide is Ras-related protein Rap-1b (rap1b) (Xenopus laevis (African clawed frog)).